The primary structure comprises 367 residues: Protein RIC-3 (367 aa).

Residues methionine 1–glycine 31 form the signal peptide. The interval arginine 30–phenylalanine 67 is disordered. At lysine 32–leucine 95 the chain is on the lumenal side. The helical transmembrane segment at methionine 96–phenylalanine 116 threads the bilayer. At lysine 117–glutamate 367 the chain is on the cytoplasmic side. The stretch at histidine 138 to proline 169 forms a coiled coil. Lysine 201 is subject to N6-acetyllysine; alternate. Residue lysine 201 forms a Glycyl lysine isopeptide (Lys-Gly) (interchain with G-Cter in ubiquitin); alternate linkage. 2 disordered regions span residues glutamine 262–cysteine 301 and alanine 322–glutamate 367. The span at serine 271–proline 280 shows a compositional bias: basic and acidic residues. The span at leucine 358–glutamate 367 shows a compositional bias: basic residues.

The protein belongs to the ric-3 family. Monomer and homodimer. Interacts with CHRNA7, CHRNA3, CHRNA4, CHRNB2, CHRNB4 and HTR3A. In terms of tissue distribution, expressed in brain, with highest levels in hippocampus, cerebellum and superior colliculus.

The protein localises to the endoplasmic reticulum membrane. Molecular chaperone which promotes the proper subunit assembly and surface trafficking of alpha-7 (CHRNA7) nicotinic acetylcholine receptor. Promotes the proper subunit assembly and cell surface expression of alpha-8 (CHRNA8) nicotinic acetylcholine receptor. May also promote functional expression of homomeric serotoninergic 5-HT3 receptors, and of heteromeric acetylcholine receptors alpha-3/beta-2, alpha-3/beta-4, alpha-4/beta-2 and alpha-4/beta-4. The chain is Protein RIC-3 (Ric3) from Mus musculus (Mouse).